The following is a 1679-amino-acid chain: Probable myosin heavy chain ECU04_1000 (1679 aa).

Polar residues predominate over residues 1–14 (MEGTTNKDIGSGSS). The segment at 1 to 22 (MEGTTNKDIGSGSSRPGGEVSV) is disordered. One can recognise a Myosin N-terminal SH3-like domain in the interval 31–79 (MEKKWVWAPSSKEAYVCGFVVKEEGDVLEIDCRGVIVRHKSCEVFRMNP). One can recognise a Myosin motor domain in the interval 83 to 754 (DMVDDLAELS…VLADIEDMRD (672 aa)). Position 176–183 (176–183 (GESGAGKT)) interacts with ATP. The interval 624–646 (LASLMSELRRTNPHFVRCIIPNL) is actin-binding. Residues 823–1644 (GEMKEKEAMI…SKMLEMKKKL (822 aa)) adopt a coiled-coil conformation.

It belongs to the TRAFAC class myosin-kinesin ATPase superfamily. Myosin family.

Cellular myosin that appears to play a role in cytokinesis, cell shape, and specialized functions such as secretion and capping. This Encephalitozoon cuniculi (strain GB-M1) (Microsporidian parasite) protein is Probable myosin heavy chain ECU04_1000.